The following is a 146-amino-acid chain: Large ribosomal subunit protein uL15 (146 aa).

A disordered region spans residues Met1–Glu51. Composition is skewed to gly residues over residues Thr23–Gln35 and Ser42–Glu51.

This sequence belongs to the universal ribosomal protein uL15 family. Part of the 50S ribosomal subunit.

Functionally, binds to the 23S rRNA. In Streptococcus gordonii (strain Challis / ATCC 35105 / BCRC 15272 / CH1 / DL1 / V288), this protein is Large ribosomal subunit protein uL15.